The primary structure comprises 413 residues: Aspartate aminotransferase, cytoplasmic (413 aa).

2 residues coordinate L-aspartate: Gly-39 and Trp-141. Ser-149 bears the Phosphoserine mark. Position 195 (Asn-195) interacts with L-aspartate. Lys-259 bears the N6-(pyridoxal phosphate)lysine mark. Arg-387 provides a ligand contact to L-aspartate.

It belongs to the class-I pyridoxal-phosphate-dependent aminotransferase family. As to quaternary structure, homodimer. Pyridoxal 5'-phosphate is required as a cofactor.

It localises to the cytoplasm. The enzyme catalyses L-aspartate + 2-oxoglutarate = oxaloacetate + L-glutamate. It catalyses the reaction L-cysteine + 2-oxoglutarate = 2-oxo-3-sulfanylpropanoate + L-glutamate. The catalysed reaction is (2S)-2-aminobutanoate + 2-oxoglutarate = 2-oxobutanoate + L-glutamate. It carries out the reaction 3-sulfino-L-alanine + 2-oxoglutarate = 3-sulfinopyruvate + L-glutamate. Functionally, biosynthesis of L-glutamate from L-aspartate or L-cysteine. Important regulator of levels of glutamate, the major excitatory neurotransmitter of the vertebrate central nervous system. Acts as a scavenger of glutamate in brain neuroprotection. The aspartate aminotransferase activity is involved in hepatic glucose synthesis during development and in adipocyte glyceroneogenesis. Using L-cysteine as substrate, regulates levels of mercaptopyruvate, an important source of hydrogen sulfide. Mercaptopyruvate is converted into H(2)S via the action of 3-mercaptopyruvate sulfurtransferase (3MST). Hydrogen sulfide is an important synaptic modulator and neuroprotectant in the brain. In addition, catalyzes (2S)-2-aminobutanoate, a by-product in the cysteine biosynthesis pathway. This Homo sapiens (Human) protein is Aspartate aminotransferase, cytoplasmic.